Consider the following 144-residue polypeptide: Protection of telomeres protein 1c (144 aa).

The protein belongs to the telombin family. Expressed at extremely low levels at the limit of detection.

It is found in the nucleus. Its subcellular location is the chromosome. It localises to the telomere. Functionally, binds specifically single-stranded telomeric DNA with weak affinity. Has probably no function in the regulation of telomere length. This Arabidopsis thaliana (Mouse-ear cress) protein is Protection of telomeres protein 1c.